Consider the following 375-residue polypeptide: 23S rRNA (uracil(747)-C(5))-methyltransferase RlmC (375 aa).

[4Fe-4S] cluster-binding residues include C3, C11, C14, and C87. Positions 212, 241, 262, and 307 each coordinate S-adenosyl-L-methionine. C334 (nucleophile) is an active-site residue.

Belongs to the class I-like SAM-binding methyltransferase superfamily. RNA M5U methyltransferase family. RlmC subfamily.

The catalysed reaction is uridine(747) in 23S rRNA + S-adenosyl-L-methionine = 5-methyluridine(747) in 23S rRNA + S-adenosyl-L-homocysteine + H(+). Its function is as follows. Catalyzes the formation of 5-methyl-uridine at position 747 (m5U747) in 23S rRNA. This chain is 23S rRNA (uracil(747)-C(5))-methyltransferase RlmC, found in Escherichia coli (strain SE11).